We begin with the raw amino-acid sequence, 356 residues long: Branched-chain-amino-acid aminotransferase 6 (356 aa).

K199 is subject to N6-(pyridoxal phosphate)lysine.

The protein belongs to the class-IV pyridoxal-phosphate-dependent aminotransferase family. It depends on pyridoxal 5'-phosphate as a cofactor.

It is found in the cytoplasm. It carries out the reaction L-leucine + 2-oxoglutarate = 4-methyl-2-oxopentanoate + L-glutamate. It catalyses the reaction L-isoleucine + 2-oxoglutarate = (S)-3-methyl-2-oxopentanoate + L-glutamate. The catalysed reaction is L-valine + 2-oxoglutarate = 3-methyl-2-oxobutanoate + L-glutamate. The protein operates within amino-acid biosynthesis; L-isoleucine biosynthesis; L-isoleucine from 2-oxobutanoate: step 4/4. It functions in the pathway amino-acid biosynthesis; L-leucine biosynthesis; L-leucine from 3-methyl-2-oxobutanoate: step 4/4. Its pathway is amino-acid biosynthesis; L-valine biosynthesis; L-valine from pyruvate: step 4/4. Converts 2-oxo acids to branched-chain amino acids. Acts on leucine, isoleucine and valine. The sequence is that of Branched-chain-amino-acid aminotransferase 6 (BCAT6) from Arabidopsis thaliana (Mouse-ear cress).